Reading from the N-terminus, the 295-residue chain is Polyadenylate-binding protein 2-B (295 aa).

The segment at 1-102 (MAAVSSVASL…EEPGELTGDQ (102 aa)) is disordered. Gly residues-rich tracts occupy residues 19 to 31 (LRGGAGPSGGGQD) and 71 to 81 (GRGGSGGGAGG). Residues 83-96 (EELEDEELEEEEPG) are compositionally biased toward acidic residues. The stretch at 106–140 (DPELEAIKARVREMEEEAEKLKELQNEVEKQMNMS) forms a coiled coil. The tract at residues 145–295 (NAGPVIMSVE…ARATSWYTPY (151 aa)) is necessary for homooligomerization. The region spanning 162–239 (RSIYVGNVDY…RQIKVVPKRT (78 aa)) is the RRM domain.

As to quaternary structure, monomer and homooligomer. Binds RNA as a monomer and oligomerizes when bound to poly(A).

The protein resides in the nucleus. It is found in the cytoplasm. Involved in the 3'-end formation of mRNA precursors (pre-mRNA) by the addition of a poly(A) tail of 200-250 nt to the upstream cleavage product. Stimulates poly(A) polymerase (PAPOLA) conferring processivity on the poly(A) tail elongation reaction and also controls the poly(A) tail length. Increases the affinity of poly(A) polymerase for RNA. Binds to poly(A) and to poly(G) with high affinity. May protect the poly(A) tail from degradation. This is Polyadenylate-binding protein 2-B (pabpn1-b) from Xenopus laevis (African clawed frog).